The chain runs to 477 residues: Probable F-box protein At5g25300 (477 aa).

The stretch at 346–377 (VDMNKEDSQIEINEKETKINQEHDQSDETQAK) forms a coiled coil. The F-box domain maps to 412 to 458 (SPPWSELPGDILRSVFERLSFVDFQRAKQTCPIKRSKSNCLRLWLIT).

This is Probable F-box protein At5g25300 from Arabidopsis thaliana (Mouse-ear cress).